Consider the following 227-residue polypeptide: Ribonuclease 3 (227 aa).

Residues 4 to 126 (LDRLERKIGY…IIGAMSLDQG (123 aa)) form the RNase III domain. Glu-39 is a binding site for Mg(2+). Asp-43 is an active-site residue. Positions 112 and 115 each coordinate Mg(2+). Residue Glu-115 is part of the active site. In terms of domain architecture, DRBM spans 153-226 (DAKTRLQEYL…AEQILKELDI (74 aa)).

It belongs to the ribonuclease III family. In terms of assembly, homodimer. Requires Mg(2+) as cofactor.

It is found in the cytoplasm. It catalyses the reaction Endonucleolytic cleavage to 5'-phosphomonoester.. Digests double-stranded RNA. Involved in the processing of primary rRNA transcript to yield the immediate precursors to the large and small rRNAs (23S and 16S). Processes some mRNAs, and tRNAs when they are encoded in the rRNA operon. Processes pre-crRNA and tracrRNA of type II CRISPR loci if present in the organism. The polypeptide is Ribonuclease 3 (Haemophilus influenzae (strain PittGG)).